A 79-amino-acid chain; its full sequence is Acyl carrier protein (79 aa).

The region spanning 2 to 77 (SEIGERVKKI…DATKFLEKNA (76 aa)) is the Carrier domain. O-(pantetheine 4'-phosphoryl)serine is present on S37.

Belongs to the acyl carrier protein (ACP) family. 4'-phosphopantetheine is transferred from CoA to a specific serine of apo-ACP by AcpS. This modification is essential for activity because fatty acids are bound in thioester linkage to the sulfhydryl of the prosthetic group.

It localises to the cytoplasm. It functions in the pathway lipid metabolism; fatty acid biosynthesis. Its function is as follows. Carrier of the growing fatty acid chain in fatty acid biosynthesis. This is Acyl carrier protein from Nitrobacter winogradskyi (strain ATCC 25391 / DSM 10237 / CIP 104748 / NCIMB 11846 / Nb-255).